The following is an 839-amino-acid chain: Dynein axonemal assembly factor 5 (839 aa).

HEAT repeat units lie at residues 10 to 48 (TSDV…DEKL), 54 to 92 (QHVF…HVPR), 94 to 137 (EEAL…VCGK), 140 to 178 (APYL…CIPE), 181 to 219 (HMQA…YSSG), 221 to 257 (SVDD…KLQD), 259 to 297 (YSFF…QWEK), 578 to 617 (GETL…KASE), 675 to 713 (LQVE…TCER), 717 to 755 (PDKL…CITD), and 723 to 761 (IYPE…ERTT).

The protein belongs to the DNAAF5 family. Interacts with DNAI2; probably involved in outer arm dynein assembly.

The protein localises to the cytoplasm. The protein resides in the dynein axonemal particle. In terms of biological role, cytoplasmic protein involved in the delivery of the dynein machinery to the motile cilium. It is required for the assembly of the axonemal dynein inner and outer arms, two structures attached to the peripheral outer doublet A microtubule of the axoneme, that play a crucial role in cilium motility. In Xenopus laevis (African clawed frog), this protein is Dynein axonemal assembly factor 5.